The sequence spans 187 residues: UPF0340 protein SPP_0683 (187 aa).

This sequence belongs to the UPF0340 family.

In Streptococcus pneumoniae (strain P1031), this protein is UPF0340 protein SPP_0683.